Here is a 317-residue protein sequence, read N- to C-terminus: Cytochrome f (317 aa).

The first 31 residues, 1–31 (MIFKPQSFLKAIVLSMTITFAFNMSAPIASA), serve as a signal peptide directing secretion. 4 residues coordinate heme: Tyr-32, Cys-52, Cys-55, and His-56. Residues 280–302 (PVRIQGLLAFFACILLAQILLVV) form a helical membrane-spanning segment.

It belongs to the cytochrome f family. The 4 large subunits of the cytochrome b6-f complex are cytochrome b6, subunit IV (17 kDa polypeptide, petD), cytochrome f and the Rieske protein, while the 4 small subunits are PetG, PetL, PetM and PetN. The complex functions as a dimer. It depends on heme as a cofactor.

It localises to the plastid. Its subcellular location is the chloroplast thylakoid membrane. Its function is as follows. Component of the cytochrome b6-f complex, which mediates electron transfer between photosystem II (PSII) and photosystem I (PSI), cyclic electron flow around PSI, and state transitions. The sequence is that of Cytochrome f from Chlamydomonas subcaudata.